A 436-amino-acid polypeptide reads, in one-letter code: MSEARKLFIKTYGCQMNVYDSERMAEALGAKGYVLTEVAEEADMVLLNTCHIREKAAEKVYSDLGRLRPLKTAKPDLKIGVAGCVAQAEGEEILKRMPLVDLVVGPQSYHRLPDMLERTEGGARVVDTDFPEEDKFDHLPERKATRGPAAFLTVQEGCDKFCAFCVVPYTRGAEVSRPFARLMAEARGLVERGVREITLLGQNVNAWSNDGRGLGGLIRELARIDGLERLRYTTSHPNDMADDLIEAHGAEPKLMPYLHLPVQSGSDRILKAMNRKHTAEHYLRLIERIRAARPDILLTSDFIVGFPGETEADFEATLDLIRAVGFGSAFSFKYSARPGTPAAEKPELPAEVCDARLQRLQALVTEQQRAAQMAMVGREVGVLYEKAGRLPGQMVGKSDHLHAVHVEDKAGQVGDLVRVRITASAPNSLAGERLGA.

The MTTase N-terminal domain occupies arginine 5–glycine 121. [4Fe-4S] cluster contacts are provided by cysteine 14, cysteine 50, cysteine 84, cysteine 158, cysteine 162, and cysteine 165. The region spanning alanine 144–alanine 374 is the Radical SAM core domain. A TRAM domain is found at methionine 373 to glycine 435.

It belongs to the methylthiotransferase family. MiaB subfamily. Monomer. [4Fe-4S] cluster serves as cofactor.

It is found in the cytoplasm. The catalysed reaction is N(6)-dimethylallyladenosine(37) in tRNA + (sulfur carrier)-SH + AH2 + 2 S-adenosyl-L-methionine = 2-methylsulfanyl-N(6)-dimethylallyladenosine(37) in tRNA + (sulfur carrier)-H + 5'-deoxyadenosine + L-methionine + A + S-adenosyl-L-homocysteine + 2 H(+). Functionally, catalyzes the methylthiolation of N6-(dimethylallyl)adenosine (i(6)A), leading to the formation of 2-methylthio-N6-(dimethylallyl)adenosine (ms(2)i(6)A) at position 37 in tRNAs that read codons beginning with uridine. The polypeptide is tRNA-2-methylthio-N(6)-dimethylallyladenosine synthase (Cereibacter sphaeroides (strain ATCC 17023 / DSM 158 / JCM 6121 / CCUG 31486 / LMG 2827 / NBRC 12203 / NCIMB 8253 / ATH 2.4.1.) (Rhodobacter sphaeroides)).